A 130-amino-acid polypeptide reads, in one-letter code: Small ribosomal subunit protein uS9 (130 aa).

It belongs to the universal ribosomal protein uS9 family.

The chain is Small ribosomal subunit protein uS9 from Delftia acidovorans (strain DSM 14801 / SPH-1).